The sequence spans 318 residues: Mitochondrial thiamine pyrophosphate carrier (318 aa).

Solcar repeat units lie at residues I13 to L106, R116 to A202, and N214 to F309. The chain crosses the membrane as a helical span at residues A19 to I39. S51 is modified (phosphoserine). Transmembrane regions (helical) follow at residues L87–V107, F122–L142, V173–F193, and L220–F240. Positions K241–V246 match the Substrate recognition motif. Residues A293–M313 traverse the membrane as a helical segment.

Belongs to the mitochondrial carrier (TC 2.A.29) family.

It is found in the mitochondrion membrane. It carries out the reaction thiamine phosphate(out) + thiamine diphosphate(in) = thiamine phosphate(in) + thiamine diphosphate(out). In terms of biological role, mitochondrial transporter mediating uptake of thiamine diphosphate into mitochondria. It is not clear if the antiporter activity is affected by the membrane potential or by the proton electrochemical gradient. The sequence is that of Mitochondrial thiamine pyrophosphate carrier (SLC25A19) from Bos taurus (Bovine).